An 819-amino-acid polypeptide reads, in one-letter code: Myosin light chain kinase 3 (819 aa).

Disordered stretches follow at residues 146-256 (VPWR…TPSE), 273-334 (VVSP…TPPR), and 347-462 (EMLM…EQDC). S152 is modified (phosphoserine). Composition is skewed to basic and acidic residues over residues 158–170 (EENK…EGGK) and 183–196 (DARE…KADV). Pro residues predominate over residues 307–318 (GPGPQCPGPPGL). A phosphoserine mark is found at S355, S401, and S408. The region spanning 515-770 (VCQHEVLGGG…ATQCLKHEWL (256 aa)) is the Protein kinase domain. Residues 521–529 (LGGGRFGQV) and K544 each bind ATP. D636 serves as the catalytic Proton acceptor.

Belongs to the protein kinase superfamily. CAMK Ser/Thr protein kinase family. Mg(2+) is required as a cofactor. Post-translationally, phosphorylated on serine residues. As to expression, restricted to heart.

The protein localises to the cytoplasm. The enzyme catalyses L-seryl-[myosin light chain] + ATP = O-phospho-L-seryl-[myosin light chain] + ADP + H(+). The catalysed reaction is L-threonyl-[myosin light chain] + ATP = O-phospho-L-threonyl-[myosin light chain] + ADP + H(+). Its function is as follows. Kinase that phosphorylates MYL2 in vitro. Promotes sarcomere formation in cardiomyocytes and increases cardiomyocyte contractility. The chain is Myosin light chain kinase 3 (MYLK3) from Homo sapiens (Human).